Consider the following 625-residue polypeptide: Probable potassium transport system protein Kup (625 aa).

The next 12 membrane-spanning stretches (helical) occupy residues threonine 13–leucine 33, isoleucine 53–valine 73, isoleucine 103–threonine 123, valine 141–glutamine 161, phenylalanine 172–isoleucine 192, alanine 206–leucine 226, tryptophan 250–leucine 270, leucine 282–isoleucine 302, isoleucine 340–phenylalanine 360, alanine 369–isoleucine 389, valine 400–leucine 420, and isoleucine 422–threonine 442.

Belongs to the HAK/KUP transporter (TC 2.A.72) family.

It localises to the cell inner membrane. It catalyses the reaction K(+)(in) + H(+)(in) = K(+)(out) + H(+)(out). Functionally, transport of potassium into the cell. Likely operates as a K(+):H(+) symporter. The protein is Probable potassium transport system protein Kup of Acinetobacter baumannii (strain ACICU).